We begin with the raw amino-acid sequence, 103 residues long: Flagellar hook-basal body complex protein FliE (103 aa).

It belongs to the FliE family.

The protein resides in the bacterial flagellum basal body. This Photorhabdus laumondii subsp. laumondii (strain DSM 15139 / CIP 105565 / TT01) (Photorhabdus luminescens subsp. laumondii) protein is Flagellar hook-basal body complex protein FliE.